The following is a 314-amino-acid chain: Vomeronasal type-1 receptor 98 (314 aa).

The Extracellular portion of the chain corresponds to Met1–Cys19. A helical transmembrane segment spans residues Glu20–Ile40. The Cytoplasmic portion of the chain corresponds to Arg41 to Asp49. The helical transmembrane segment at Leu50 to Ala70 threads the bilayer. At Lys71 to Arg92 the chain is on the extracellular side. A disulfide bridge connects residues Cys84 and Cys171. A helical membrane pass occupies residues Phe93–Leu113. Topologically, residues Cys114–Cys133 are cytoplasmic. Residues Phe134–Ile154 form a helical membrane-spanning segment. Over Ala155 to Thr186 the chain is Extracellular. N-linked (GlcNAc...) asparagine glycosylation is present at Asn158. The helical transmembrane segment at Leu187–Ala207 threads the bilayer. The Cytoplasmic portion of the chain corresponds to Thr208–Ala235. A helical transmembrane segment spans residues Ile236–Ile256. Residues Ser257–Ser268 are Extracellular-facing. Residues Leu269 to Leu289 form a helical membrane-spanning segment. Over Ser290–Trp314 the chain is Cytoplasmic.

This sequence belongs to the G-protein coupled receptor 1 family.

It localises to the cell membrane. In terms of biological role, putative pheromone receptor implicated in the regulation of social as well as reproductive behavior. The polypeptide is Vomeronasal type-1 receptor 98 (Vom1r98) (Rattus norvegicus (Rat)).